A 342-amino-acid chain; its full sequence is Biotin synthase (342 aa).

A Radical SAM core domain is found at 63-288 (PEVEVEGIIS…RTMLRFAGGR (226 aa)). [4Fe-4S] cluster is bound by residues Cys78, Cys82, and Cys85. Residues Cys121, Cys154, Cys213, and Arg283 each coordinate [2Fe-2S] cluster.

This sequence belongs to the radical SAM superfamily. Biotin synthase family. As to quaternary structure, homodimer. It depends on [4Fe-4S] cluster as a cofactor. Requires [2Fe-2S] cluster as cofactor.

The enzyme catalyses (4R,5S)-dethiobiotin + (sulfur carrier)-SH + 2 reduced [2Fe-2S]-[ferredoxin] + 2 S-adenosyl-L-methionine = (sulfur carrier)-H + biotin + 2 5'-deoxyadenosine + 2 L-methionine + 2 oxidized [2Fe-2S]-[ferredoxin]. The protein operates within cofactor biosynthesis; biotin biosynthesis; biotin from 7,8-diaminononanoate: step 2/2. Its function is as follows. Catalyzes the conversion of dethiobiotin (DTB) to biotin by the insertion of a sulfur atom into dethiobiotin via a radical-based mechanism. This is Biotin synthase from Mycobacteroides abscessus (strain ATCC 19977 / DSM 44196 / CCUG 20993 / CIP 104536 / JCM 13569 / NCTC 13031 / TMC 1543 / L948) (Mycobacterium abscessus).